The chain runs to 353 residues: Ubiquinol oxidase 2, mitochondrial (353 aa).

The transit peptide at 1 to 21 directs the protein to the mitochondrion; the sequence is MSQLITKAALRVLLVCGRGNC. The helical transmembrane segment at 178 to 198 threads the bilayer; that stretch reads AMMLETVAAVPGMVGGMLLHL. Residues E182, E221, and H224 each contribute to the Fe cation site. A helical membrane pass occupies residues 240–260; sequence LLVMLVQGIFFNSFFVCYVIS. Residues E272, E323, and H326 each contribute to the Fe cation site.

Belongs to the alternative oxidase family. In terms of assembly, homodimer; disulfide-linked. The cofactor is Fe cation. As to expression, maximally expressed in dry seeds. Detected in roots, stems and leaves.

The protein localises to the mitochondrion inner membrane. It catalyses the reaction 2 a ubiquinol + O2 = 2 a ubiquinone + 2 H2O. In terms of biological role, catalyzes the cyanide-resistant oxidation of ubiquinol and the reduction of molecular oxygen to water, but does not translocate protons and consequently is not linked to oxidative phosphorylation. May increase respiration when the cytochrome respiratory pathway is restricted, or in response to low temperatures. This is Ubiquinol oxidase 2, mitochondrial (AOX2) from Arabidopsis thaliana (Mouse-ear cress).